Reading from the N-terminus, the 654-residue chain is Glycogen debranching enzyme (654 aa).

The active-site Nucleophile is aspartate 336. Glutamate 371 (proton donor) is an active-site residue. Residues 459–484 (EANGEENRDGTNSNYSDNHGKEGLGG) are disordered.

It belongs to the glycosyl hydrolase 13 family.

The enzyme catalyses Hydrolysis of (1-&gt;6)-alpha-D-glucosidic linkages to branches with degrees of polymerization of three or four glucose residues in limit dextrin.. The protein operates within glycan degradation; glycogen degradation. Its function is as follows. Removes maltotriose and maltotetraose chains that are attached by 1,6-alpha-linkage to the limit dextrin main chain, generating a debranched limit dextrin. The polypeptide is Glycogen debranching enzyme (Salmonella typhi).